A 100-amino-acid polypeptide reads, in one-letter code: Urease subunit gamma (100 aa).

Belongs to the urease gamma subunit family. In terms of assembly, heterotrimer of UreA (gamma), UreB (beta) and UreC (alpha) subunits. Three heterotrimers associate to form the active enzyme.

It is found in the cytoplasm. It catalyses the reaction urea + 2 H2O + H(+) = hydrogencarbonate + 2 NH4(+). Its pathway is nitrogen metabolism; urea degradation; CO(2) and NH(3) from urea (urease route): step 1/1. This is Urease subunit gamma from Ruegeria pomeroyi (strain ATCC 700808 / DSM 15171 / DSS-3) (Silicibacter pomeroyi).